We begin with the raw amino-acid sequence, 289 residues long: Shikimate dehydrogenase (NADP(+)) (289 aa).

Residues 22–24 (SRS) and threonine 69 contribute to the shikimate site. The active-site Proton acceptor is the lysine 73. Glutamate 85 serves as a coordination point for NADP(+). Residues asparagine 94 and aspartate 109 each contribute to the shikimate site. NADP(+) contacts are provided by residues 134 to 138 (GAGGA), 158 to 163 (NRTLSR), and isoleucine 226. Tyrosine 228 lines the shikimate pocket. Glycine 249 serves as a coordination point for NADP(+).

The protein belongs to the shikimate dehydrogenase family. In terms of assembly, homodimer.

The catalysed reaction is shikimate + NADP(+) = 3-dehydroshikimate + NADPH + H(+). It participates in metabolic intermediate biosynthesis; chorismate biosynthesis; chorismate from D-erythrose 4-phosphate and phosphoenolpyruvate: step 4/7. Functionally, involved in the biosynthesis of the chorismate, which leads to the biosynthesis of aromatic amino acids. Catalyzes the reversible NADPH linked reduction of 3-dehydroshikimate (DHSA) to yield shikimate (SA). This Brucella ovis (strain ATCC 25840 / 63/290 / NCTC 10512) protein is Shikimate dehydrogenase (NADP(+)).